Reading from the N-terminus, the 532-residue chain is E3 ubiquitin-protein ligase ICP0 (532 aa).

Cysteine 8, cysteine 11, cysteine 24, histidine 26, cysteine 29, cysteine 32, cysteine 43, and cysteine 46 together coordinate Zn(2+). The RING-type zinc-finger motif lies at 8 to 47; that stretch reads CPICLEDPSNYSMALPCLHAFCYVCITRWIRQNPTCPLCK. 4 disordered regions span residues 206 to 391, 406 to 426, 461 to 498, and 510 to 532; these read EYID…PMRP, APRD…AGPR, EDES…IRQG, and QTQP…RRNQ. Acidic residues-rich tracts occupy residues 217-227 and 234-243; these read SEEETDSDIEV and DPEDTSDETS. Residues 286–295 are compositionally biased toward basic residues; the sequence is RSARLRRRQP.

Post-translationally, auto-ubiquitinated.

The enzyme catalyses S-ubiquitinyl-[E2 ubiquitin-conjugating enzyme]-L-cysteine + [acceptor protein]-L-lysine = [E2 ubiquitin-conjugating enzyme]-L-cysteine + N(6)-ubiquitinyl-[acceptor protein]-L-lysine.. Its function is as follows. Evades nuclear antiviral defenses triggered by dsDNA viruses. Acts during the initial stages of lytic infection and the reactivation of latent viral genome. Prevents the antiviral effect of nuclear bodies by degrading host PML and SP100. The polypeptide is E3 ubiquitin-protein ligase ICP0 (63) (Equus caballus (Horse)).